We begin with the raw amino-acid sequence, 388 residues long: Cdc42 effector protein 1 (388 aa).

Residues 1–28 (MPGPQGGTGAPSMSLGKLSPVGWVPSSH) are disordered. Residues Ser19 and Ser27 each carry the phosphoserine modification. Position 34 is a phosphothreonine (Thr34). Positions 38-52 (ISPPLGDFRHTMHVG) constitute a CRIB domain. Ser39 is subject to Phosphoserine. At Arg53 the chain carries Omega-N-methylarginine. Residues Ser65, Ser77, Ser101, Ser113, Ser121, and Ser139 each carry the phosphoserine modification. Positions 165-206 (RLPRVEKHSSRDRDHDRDPDHSQDREQSSSPSEPNPNPELRR) are disordered. The span at 167-191 (PRVEKHSSRDRDHDRDPDHSQDREQ) shows a compositional bias: basic and acidic residues. Residues Ser193, Ser207, Ser209, and Ser212 each carry the phosphoserine modification. 2 repeat units span residues 237–243 (PAANPPA) and 250–256 (PTAKPPA). The disordered stretch occupies residues 237-257 (PAANPPAPAANPAPTAKPPAD). Positions 237-270 (PAANPPAPAANPAPTAKPPADAVTTLDTVTSLPA) are 2 X 7 AA tandem repeats of [PT]-[AT]-A-[ENT]-[PT]-[PTS]-[AG]. Residues 239 to 253 (ANPPAPAANPAPTAK) are compositionally biased toward pro residues. Residues Ser298, Ser318, Ser347, and Ser350 each carry the phosphoserine modification.

The protein belongs to the BORG/CEP family. Interacts with RHOQ and CDC42, in a GTP-dependent manner.

It is found in the endomembrane system. The protein localises to the cytoplasm. The protein resides in the cytoskeleton. Probably involved in the organization of the actin cytoskeleton. Induced membrane extensions in fibroblasts. The protein is Cdc42 effector protein 1 of Rattus norvegicus (Rat).